The sequence spans 381 residues: Erythronate-4-phosphate dehydrogenase (381 aa).

Residues Ser45 and Thr67 each coordinate substrate. NAD(+) contacts are provided by residues Asp148, 207-209 (ASR), and Asp233. Arg209 is an active-site residue. The active site involves Glu238. His255 (proton donor) is an active-site residue. Gly258 lines the NAD(+) pocket.

It belongs to the D-isomer specific 2-hydroxyacid dehydrogenase family. PdxB subfamily. Homodimer.

It is found in the cytoplasm. It carries out the reaction 4-phospho-D-erythronate + NAD(+) = (R)-3-hydroxy-2-oxo-4-phosphooxybutanoate + NADH + H(+). The protein operates within cofactor biosynthesis; pyridoxine 5'-phosphate biosynthesis; pyridoxine 5'-phosphate from D-erythrose 4-phosphate: step 2/5. Catalyzes the oxidation of erythronate-4-phosphate to 3-hydroxy-2-oxo-4-phosphonooxybutanoate. The protein is Erythronate-4-phosphate dehydrogenase of Idiomarina loihiensis (strain ATCC BAA-735 / DSM 15497 / L2-TR).